Consider the following 325-residue polypeptide: Phospho-N-acetylmuramoyl-pentapeptide-transferase (325 aa).

10 consecutive transmembrane segments (helical) span residues 3–23, 48–68, 79–99, 106–126, 136–156, 174–194, 199–219, 223–243, 246–266, and 298–318; these read LMIYSVLVAFVVSLIQGPILI, GTPTMGGVIFIISSVITVFVV, AIFAFVAFGIIGLIDDSLKII, LKAYQKMILLLIVSSIIGFYA, IIVPFVHKTWNLGMFYIPFII, GLATSITLLVMTFFAVVSYAT, LAVFCSIVAGALLGFLKYNAY, VFMGDTGSLALGGVVGAVAMM, LPLIVIIVGGIYLAEALSVIL, and IVSIFSIITVILCLIGFLSLI.

Belongs to the glycosyltransferase 4 family. MraY subfamily. It depends on Mg(2+) as a cofactor.

The protein resides in the cell membrane. It carries out the reaction UDP-N-acetyl-alpha-D-muramoyl-L-alanyl-gamma-D-glutamyl-meso-2,6-diaminopimeloyl-D-alanyl-D-alanine + di-trans,octa-cis-undecaprenyl phosphate = di-trans,octa-cis-undecaprenyl diphospho-N-acetyl-alpha-D-muramoyl-L-alanyl-D-glutamyl-meso-2,6-diaminopimeloyl-D-alanyl-D-alanine + UMP. It functions in the pathway cell wall biogenesis; peptidoglycan biosynthesis. Functionally, catalyzes the initial step of the lipid cycle reactions in the biosynthesis of the cell wall peptidoglycan: transfers peptidoglycan precursor phospho-MurNAc-pentapeptide from UDP-MurNAc-pentapeptide onto the lipid carrier undecaprenyl phosphate, yielding undecaprenyl-pyrophosphoryl-MurNAc-pentapeptide, known as lipid I. This Clostridium novyi (strain NT) protein is Phospho-N-acetylmuramoyl-pentapeptide-transferase.